The primary structure comprises 67 residues: Large ribosomal subunit protein bL31 (67 aa).

Residues Cys16, Cys18, Cys36, and Cys39 each coordinate Zn(2+).

It belongs to the bacterial ribosomal protein bL31 family. Type A subfamily. Part of the 50S ribosomal subunit. The cofactor is Zn(2+).

Its function is as follows. Binds the 23S rRNA. In Syntrophomonas wolfei subsp. wolfei (strain DSM 2245B / Goettingen), this protein is Large ribosomal subunit protein bL31.